We begin with the raw amino-acid sequence, 554 residues long: uncharacterized protein (554 aa).

An N-terminal signal peptide occupies residues 1 to 33; that stretch reads MKKILIIILFIIIFIVLIYSGLWFVIMFSLSHS.

This is an uncharacterized protein from Rickettsia prowazekii (strain Madrid E).